Consider the following 184-residue polypeptide: HVA22-like protein c (184 aa).

3 consecutive transmembrane segments (helical) span residues 13 to 33, 51 to 71, and 73 to 93; these read VLIK…YPLY, LTYW…SKPL, and WFPI…LPQF.

This sequence belongs to the DP1 family. Predominantly expressed in flower buds and stem.

It is found in the membrane. This is HVA22-like protein c (HVA22C) from Arabidopsis thaliana (Mouse-ear cress).